A 319-amino-acid chain; its full sequence is Annexin A5 (319 aa).

N-acetylalanine is present on Ala2. Annexin repeat units follow at residues 13-84 (FDGR…ALMK), 85-156 (PSRL…VLLQ), 168-240 (AQVE…AVVK), and 244-315 (SIPA…LLCG). Lys27 participates in a covalent cross-link: Glycyl lysine isopeptide (Lys-Gly) (interchain with G-Cter in SUMO1); alternate. A Glycyl lysine isopeptide (Lys-Gly) (interchain with G-Cter in SUMO2); alternate cross-link involves residue Lys27. Phosphoserine is present on Ser35. Residues Lys68, Lys74, Lys77, Lys95, and Lys99 each carry the N6-acetyllysine modification. Position 288 is an N6-succinyllysine (Lys288). Positions 312–318 (LLCGGED) match the [IL]-x-C-x-x-[DE] motif motif.

It belongs to the annexin family. As to quaternary structure, monomer. Binds ATRX, EIF5B and DNMT1. S-nitrosylation is induced by interferon-gamma and oxidatively-modified low-densitity lipoprotein (LDL(ox)) possibly implicating the iNOS-S100A8/9 transnitrosylase complex.

Its function is as follows. This protein is an anticoagulant protein that acts as an indirect inhibitor of the thromboplastin-specific complex, which is involved in the blood coagulation cascade. This is Annexin A5 (Anxa5) from Rattus norvegicus (Rat).